A 260-amino-acid chain; its full sequence is Ribonuclease PH (260 aa).

Phosphate contacts are provided by residues R88 and 126–128; that span reads GTR.

Belongs to the RNase PH family. In terms of assembly, homohexameric ring arranged as a trimer of dimers.

The enzyme catalyses tRNA(n+1) + phosphate = tRNA(n) + a ribonucleoside 5'-diphosphate. Its function is as follows. Phosphorolytic 3'-5' exoribonuclease that plays an important role in tRNA 3'-end maturation. Removes nucleotide residues following the 3'-CCA terminus of tRNAs; can also add nucleotides to the ends of RNA molecules by using nucleoside diphosphates as substrates, but this may not be physiologically important. Probably plays a role in initiation of 16S rRNA degradation (leading to ribosome degradation) during starvation. The chain is Ribonuclease PH from Mycobacterium sp. (strain JLS).